A 115-amino-acid chain; its full sequence is Large ribosomal subunit protein bL19 (115 aa).

The protein belongs to the bacterial ribosomal protein bL19 family.

In terms of biological role, this protein is located at the 30S-50S ribosomal subunit interface and may play a role in the structure and function of the aminoacyl-tRNA binding site. In Fervidobacterium nodosum (strain ATCC 35602 / DSM 5306 / Rt17-B1), this protein is Large ribosomal subunit protein bL19.